A 128-amino-acid polypeptide reads, in one-letter code: Azurin (128 aa).

The 128-residue stretch at 1 to 128 (AECKVTVDST…AMMKGTVTLK (128 aa)) folds into the Plastocyanin-like domain. An intrachain disulfide couples Cys3 to Cys26. Cu cation-binding residues include His46, Cys112, His117, and Met121.

The protein resides in the periplasm. Functionally, transfers electrons from cytochrome c551 to cytochrome oxidase. In Pseudomonas fluorescens biotype C, this protein is Azurin.